We begin with the raw amino-acid sequence, 241 residues long: MEEDWEQHGEKEEVPLPAKKPDANKWDGEDEEEEVKDSWEDEDELEEKKDEEKVETPKAKPKKTLQQKIVEKEKQKHEEAERRRLEKEAENMTPEQKLAEKLRLQKLQEESDLKNALDTFGVTTLAGGIDGMTPNTKEDFVELSDAIVKKLASYKSDPEYADFLEDLVTKLFAGLPSNNIRKVKGILDNLYLEKQKLEKGDKPKKSKGGKVKARLKLDGENQNFDEYQPKYDDFDEYDDFM.

Residues 1 to 27 (MEEDWEQHGEKEEVPLPAKKPDANKWD) are compositionally biased toward basic and acidic residues. The disordered stretch occupies residues 1–99 (MEEDWEQHGE…ENMTPEQKLA (99 aa)). Residues 28 to 45 (GEDEEEEVKDSWEDEDEL) are compositionally biased toward acidic residues. A coiled-coil region spans residues 31-119 (EEEEVKDSWE…ESDLKNALDT (89 aa)). Basic and acidic residues-rich tracts occupy residues 46 to 58 (EEKKDEEKVETPK) and 69 to 90 (IVEKEKQKHEEAERRRLEKEAE).

Belongs to the eIF-3 subunit J family. In terms of assembly, component of the eukaryotic translation initiation factor 3 (eIF-3) complex.

The protein resides in the cytoplasm. In terms of biological role, component of the eukaryotic translation initiation factor 3 (eIF-3) complex, which is involved in protein synthesis of a specialized repertoire of mRNAs and, together with other initiation factors, stimulates binding of mRNA and methionyl-tRNAi to the 40S ribosome. The eIF-3 complex specifically targets and initiates translation of a subset of mRNAs involved in cell proliferation. The protein is Eukaryotic translation initiation factor 3 subunit J of Culex quinquefasciatus (Southern house mosquito).